The primary structure comprises 759 residues: Nucleolar RNA helicase 2-A (759 aa).

Positions M1 to I154 are disordered. Residues E77 to Q86 show a composition bias toward acidic residues. The Q motif motif lies at G179–S207. The Helicase ATP-binding domain occupies F210 to K389. An ATP-binding site is contributed by A223 to T230. The DEAD box motif lies at D332–D335. The Helicase C-terminal domain occupies D422 to A566. Positions Q709–R759 are disordered. Over residues E710 to R719 the composition is skewed to basic and acidic residues. Over residues G748–R759 the composition is skewed to basic residues.

It belongs to the DEAD box helicase family. DDX21/DDX50 subfamily. As to expression, widely expressed. Expressed at higher level in stomach. Expressed at higher level compared to ddx21-b.

Its subcellular location is the nucleus. The protein localises to the nucleolus. The protein resides in the nucleoplasm. It localises to the cytoplasm. It is found in the cytosol. Its subcellular location is the mitochondrion. The enzyme catalyses ATP + H2O = ADP + phosphate + H(+). Its function is as follows. RNA helicase that acts as a sensor of the transcriptional status of both RNA polymerase (Pol) I and II: promotes ribosomal RNA (rRNA) processing and transcription from polymerase II (Pol II). Binds various RNAs, such as rRNAs, snoRNAs, 7SK and, at lower extent, mRNAs. In the nucleolus, localizes to rDNA locus, where it directly binds rRNAs and snoRNAs, and promotes rRNA transcription, processing and modification. Required for rRNA 2'-O-methylation, possibly by promoting the recruitment of late-acting snoRNAs SNORD56 and SNORD58 with pre-ribosomal complexes. In the nucleoplasm, binds 7SK RNA and is recruited to the promoters of Pol II-transcribed genes: acts by facilitating the release of P-TEFb from inhibitory 7SK snRNP in a manner that is dependent on its helicase activity, thereby promoting transcription of its target genes. Required to prevent R-loop-associated DNA damage and transcription-associated genomic instability. In Xenopus laevis (African clawed frog), this protein is Nucleolar RNA helicase 2-A (ddx21-a).